We begin with the raw amino-acid sequence, 100 residues long: Small ribosomal subunit protein uS14c (100 aa).

Belongs to the universal ribosomal protein uS14 family. Part of the 30S ribosomal subunit.

It localises to the plastid. Its function is as follows. Binds 16S rRNA, required for the assembly of 30S particles. This chain is Small ribosomal subunit protein uS14c, found in Cuscuta exaltata (Tall dodder).